The sequence spans 184 residues: Probable maltose O-acetyltransferase (184 aa).

Asparagine 84 contributes to the acetyl-CoA binding site. Histidine 114 functions as the Proton donor/acceptor in the catalytic mechanism. Residues glycine 141, serine 159, 164 to 165 (TK), arginine 179, and lysine 182 contribute to the acetyl-CoA site.

It belongs to the transferase hexapeptide repeat family. In terms of assembly, homodimer.

The enzyme catalyses D-maltose + acetyl-CoA = 1-O-acetylmaltose + CoA. Its function is as follows. Catalyzes the CoA-dependent transfer of an acetyl group to maltose and other sugars. Acetylates glucose exclusively at the C6 position and maltose at the C6 position of the non-reducing end glucosyl moiety. Is able to acetylate maltooligosaccharides. The chain is Probable maltose O-acetyltransferase (maa) from Bacillus subtilis (strain 168).